The following is a 381-amino-acid chain: Metallophosphoesterase 1 (381 aa).

Residues Leu15–Ile35 traverse the membrane as a helical segment. Residues Asp59, Asp101, Asn139, His234, His288, and His290 each contribute to the a divalent metal cation site. Residues Thr341–Leu361 form a helical membrane-spanning segment. A Di-lysine motif motif is present at residues Lys377–Leu381.

The protein belongs to the metallophosphoesterase superfamily. MPPE1 family. Requires Mn(2+) as cofactor.

The protein localises to the endoplasmic reticulum-Golgi intermediate compartment membrane. Functionally, metallophosphoesterase that catalyzes the removal of a side-chain ethanolamine-phosphate (EtNP) from the second mannose of the GPI-anchor protein intermediate. Participates in the glycan remodeling steps of GPI-anchor maturation to allow an efficient transport of GPI-anchor proteins from the endoplasmic reticulum to the Golgi. The protein is Metallophosphoesterase 1 of Danio rerio (Zebrafish).